The chain runs to 320 residues: o-succinylbenzoate synthase (320 aa).

Lysine 133 acts as the Proton donor in catalysis. Residues aspartate 161, glutamate 190, and aspartate 213 each coordinate Mg(2+). Catalysis depends on lysine 235, which acts as the Proton acceptor.

Belongs to the mandelate racemase/muconate lactonizing enzyme family. MenC type 1 subfamily. The cofactor is a divalent metal cation.

The catalysed reaction is (1R,6R)-6-hydroxy-2-succinyl-cyclohexa-2,4-diene-1-carboxylate = 2-succinylbenzoate + H2O. Its pathway is quinol/quinone metabolism; 1,4-dihydroxy-2-naphthoate biosynthesis; 1,4-dihydroxy-2-naphthoate from chorismate: step 4/7. It participates in quinol/quinone metabolism; menaquinone biosynthesis. Its function is as follows. Converts 2-succinyl-6-hydroxy-2,4-cyclohexadiene-1-carboxylate (SHCHC) to 2-succinylbenzoate (OSB). In Salmonella enteritidis PT4 (strain P125109), this protein is o-succinylbenzoate synthase.